Consider the following 2045-residue polypeptide: Host cell factor 1 (2045 aa).

A2 is subject to N-acetylalanine. S6 carries the phosphoserine modification. Kelch repeat units follow at residues 44 to 89, 93 to 140, 148 to 194, 217 to 265, and 266 to 313; these read LIVV…GFVC, RLLV…RLGH, KCYL…ITYG, KLVI…TIGN, and KMYV…LMDT. Glycyl lysine isopeptide (Lys-Gly) (interchain with G-Cter in ubiquitin) cross-links involve residues K105, K163, and K244. K282 participates in a covalent cross-link: Glycyl lysine isopeptide (Lys-Gly) (interchain with G-Cter in SUMO2). Position 288 is an N6-acetyllysine (K288). K363 is covalently cross-linked (Glycyl lysine isopeptide (Lys-Gly) (interchain with G-Cter in ubiquitin)). The Fibronectin type-III 1 domain maps to 366 to 457; sequence PPARVQLVRA…VPQAATAPPS (92 aa). The segment at 407–434 is disordered; sequence ATATSPTPNPVPSVPANPPKSPAPAAAA. S411 is modified (phosphoserine). The span at 413–428 shows a compositional bias: pro residues; the sequence is TPNPVPSVPANPPKSP. Residues 500–550 are required for interaction with OGT; sequence LVTMRPASQAGKAPVTVTSLPASVRMVVPTQSAQGTVIGSNPQMSGMAALA. R504 and R524 each carry omega-N-methylarginine. Phosphoserine is present on residues S598, S666, and S669. Residues 610–722 are interaction with SIN3A; that stretch reads LKTAAAQVGT…KGPLPAGTIL (113 aa). The interaction with ZBTB17 stretch occupies residues 750–902; sequence ILGISSVSPS…SLAGAGAHST (153 aa). An N6-acetyllysine modification is found at K813. The interaction with GABP2 stretch occupies residues 813–912; that stretch reads KIITAVPKIA…SASLATPITT (100 aa). HCF repeat repeat units follow at residues 1010–1035, 1072–1097, and 1101–1126; these read TLVC…TVVA, VRVC…ATSN, and QHGC…AMSS. One copy of the HCF repeat 4; degenerate repeat lies at 1157–1182; sequence VQGTVKPQCQTQQTNMTTTTMTVQAT. Position 1204 is a phosphoserine (S1204). Residue R1216 is modified to Asymmetric dimethylarginine. 4 disordered regions span residues 1219–1242, 1302–1375, 1444–1475, and 1494–1525; these read LSGP…YTTN, PCET…TSTG, TVTS…STNI, and TTVT…QLPP. The residue at position 1223 (S1223) is a Phosphoserine. 2 HCF repeat repeats span residues 1295–1320 and 1323–1348; these read TQVC…SNAG and QRVC…ATSN. The span at 1308-1321 shows a compositional bias: low complexity; it reads TGTTNTATTSNAGS. An HCF repeat 7; degenerate repeat occupies 1358-1383; the sequence is QQPASGHPCETHQTTSTGTTMSVSVG. An HCF repeat 8 repeat occupies 1423–1448; the sequence is QRVCSNPPCETHETGTTHTATTVTSN. A Phosphothreonine modification is found at T1500. Positions 1502-1511 are enriched in pro residues; that stretch reads VPGPSVPPPE. S1506, S1516, and S1781 each carry phosphoserine. Fibronectin type-III domains lie at 1808–1898 and 1900–2016; these read PPPP…TCLP and FPGA…TSKD. Glycyl lysine isopeptide (Lys-Gly) (interchain with G-Cter in ubiquitin) cross-links involve residues K1817 and K1818. At S1848 the chain carries Phosphoserine. The interval 2004–2045 is disordered; sequence ATQVRWLQETSKDSSGTKPASKRPMSSPEMKSAPKKSKADGQ. K2015 is modified (N6-acetyllysine). A Glycyl lysine isopeptide (Lys-Gly) (interchain with G-Cter in SUMO2) cross-link involves residue K2034.

In terms of assembly, composed predominantly of six polypeptides ranging from 110 to 150 kDa and a minor 300 kDa polypeptide. The majority of N- and C-terminal cleavage products remain tightly, albeit non-covalently, associated. Interacts with POU2F1, CREB3, ZBTB17, EGR2, E2F4, CREBZF, SP1, GABP2, Sin3 HDAC complex (SIN3A, HDAC1, HDAC2, SUDS3), SAP30, SIN3B and FHL2. Component of a MLL1 complex, composed of at least the core components KMT2A/MLL1, ASH2L, HCFC1, WDR5 and RBBP5, as well as the facultative components BACC1, CHD8, DPY30, E2F6, HCFC2, HSP70, INO80C, KANSL1, LAS1L, MAX, MCRS1, MEN1, MGA, KAT8, PELP1, PHF20, PRP31, RING2, RUVBL1, RUVBL2, SENP3, TAF1, TAF4, TAF6, TAF7, TAF9 and TEX10. Component of a THAP1/THAP3-HCFC1-OGT complex that is required for the regulation of the transcriptional activity of RRM1. Interacts directly with THAP3 (via its HBM). Interacts (via the Kelch-repeat domain) with THAP1 (via the HBM); the interaction recruits HCHC1 to the RRM1. Interacts with THAP7 and THAP11 (via the HMB). Interacts directly with OGT; the interaction, which requires the HCFC1 cleavage site domain, glycosylates and promotes the proteolytic processing of HCFC1 and retains OGT in the nucleus. Component of the SET1 complex, at least composed of the catalytic subunit (SETD1A or SETD1B), WDR5, WDR82, RBBP5, ASH2L, CXXC1, HCFC1 and DPY30. Component of the NSL complex at least composed of MOF/KAT8, KANSL1, KANSL2, KANSL3, MCRS1, PHF20, OGT1/OGT, WDR5 and HCFC1. Component of a complex at least composed of ZNF335, HCFC1, CCAR2, EMSY, MKI67, RBBP5, ASH2L and WDR5; the complex is formed as a result of interactions between components of a nuclear receptor-mediated transcription complex and a histone methylation complex. Within the complex interacts with ZNF335. Interacts with TET2 and TET3. Interacts with HCFC1R1. Interacts with THAP11. Interacts (via Kelch domain) with KMT2E (via HBM motif). Interacts with E2F1. Accessory scaffold component of the polycomb repressive deubiquitinase (PR-DUB) complex, at least composed of BAP1, one of ASXL1, ASXL2 or (probably) ASXL3 and one of MBD5 or MBD6; the PR-DUB core associates with a number of accessory proteins, including FOXK1, FOXK2, KDM1B, HCFC1, YY1 and OGT. Interacts with YY1 (via Gly-rich region); the interaction is direct. Interacts with BAP1 (via HBM-like motif). In terms of processing, proteolytically cleaved at one or several PPCE--THET sites within the HCF repeats. Further cleavage of the primary N- and C-terminal chains results in a 'trimming' and accumulation of the smaller chains. Cleavage is promoted by O-glycosylation. O-glycosylated. GlcNAcylation by OGT promotes proteolytic processing. Post-translationally, ubiquitinated. Lys-1817 and Lys-1818 are ubiquitinated both via 'Lys-48'- and 'Lys-63'-linked polyubiquitin chains. BAP1 mediated deubiquitination of 'Lys-48'-linked polyubiquitin chains; deubiquitination by BAP1 does not seem to stabilize the protein. Expressed in liver, pituitary gland, skeletal muscle, kidney, eye and brain (at protein level). Also observed at low level in heart, spleen and lung.

It localises to the nucleus. The protein localises to the cytoplasm. Transcriptional coregulator. Serves as a scaffold protein, bridging interactions between transcription factors, including THAP11 and ZNF143, and transcriptional coregulators. Involved in control of the cell cycle. Also antagonizes transactivation by ZBTB17 and GABP2; represses ZBTB17 activation of the p15(INK4b) promoter and inhibits its ability to recruit p300. Coactivator for EGR2 and GABP2. Tethers the chromatin modifying Set1/Ash2 histone H3 'Lys-4' methyltransferase (H3K4me) and Sin3 histone deacetylase (HDAC) complexes (involved in the activation and repression of transcription respectively) together. As part of the NSL complex it may be involved in acetylation of nucleosomal histone H4 on several lysine residues. Recruits KMT2E to E2F1 responsive promoters promoting transcriptional activation and thereby facilitates G1 to S phase transition. Modulates expression of homeobox protein PDX1, perhaps acting in concert with transcription factor E2F1, thereby regulating pancreatic beta-cell growth and glucose-stimulated insulin secretion. May negatively modulate transcriptional activity of FOXO3. This Mus musculus (Mouse) protein is Host cell factor 1.